The sequence spans 159 residues: Ribosomal RNA large subunit methyltransferase H (159 aa).

Residues L76, G108, and 127–132 contribute to the S-adenosyl-L-methionine site; that span reads FSKMTF.

The protein belongs to the RNA methyltransferase RlmH family. In terms of assembly, homodimer.

The protein localises to the cytoplasm. It carries out the reaction pseudouridine(1915) in 23S rRNA + S-adenosyl-L-methionine = N(3)-methylpseudouridine(1915) in 23S rRNA + S-adenosyl-L-homocysteine + H(+). Specifically methylates the pseudouridine at position 1915 (m3Psi1915) in 23S rRNA. This chain is Ribosomal RNA large subunit methyltransferase H, found in Lachnoclostridium phytofermentans (strain ATCC 700394 / DSM 18823 / ISDg) (Clostridium phytofermentans).